We begin with the raw amino-acid sequence, 357 residues long: 3-isopropylmalate dehydrogenase (357 aa).

76 to 89 provides a ligand contact to NAD(+); the sequence is GPQWDTIDPSLRPE. Residues arginine 96, arginine 106, arginine 134, and aspartate 224 each contribute to the substrate site. Mg(2+) is bound by residues aspartate 224, aspartate 248, and aspartate 252. 282–294 contributes to the NAD(+) binding site; the sequence is GSAPDIAGKGIAN.

Belongs to the isocitrate and isopropylmalate dehydrogenases family. LeuB type 1 subfamily. As to quaternary structure, homodimer. It depends on Mg(2+) as a cofactor. Requires Mn(2+) as cofactor.

The protein localises to the cytoplasm. It catalyses the reaction (2R,3S)-3-isopropylmalate + NAD(+) = 4-methyl-2-oxopentanoate + CO2 + NADH. The protein operates within amino-acid biosynthesis; L-leucine biosynthesis; L-leucine from 3-methyl-2-oxobutanoate: step 3/4. In terms of biological role, catalyzes the oxidation of 3-carboxy-2-hydroxy-4-methylpentanoate (3-isopropylmalate) to 3-carboxy-4-methyl-2-oxopentanoate. The product decarboxylates to 4-methyl-2 oxopentanoate. This Xanthomonas oryzae pv. oryzae (strain MAFF 311018) protein is 3-isopropylmalate dehydrogenase.